The chain runs to 294 residues: Large ribosomal subunit protein uL18A (294 aa).

Ser10 carries the phosphoserine modification. Tyr12 is modified (phosphotyrosine). Position 81 is a phosphoserine (Ser81).

It belongs to the universal ribosomal protein uL18 family. In terms of assembly, component of the large ribosomal subunit (LSU). Mature yeast ribosomes consist of a small (40S) and a large (60S) subunit. The 40S small subunit contains 1 molecule of ribosomal RNA (18S rRNA) and 33 different proteins (encoded by 57 genes). The large 60S subunit contains 3 rRNA molecules (25S, 5.8S and 5S rRNA) and 46 different proteins (encoded by 81 genes). Component of a hexameric 5S RNP precursor complex, composed of 5S RNA, rrs1, rpf2, rpl5a/rpl5b, rpl11a/rpl11b and syo1; this complex acts as a precursor for ribosome assembly. rpl5a/rpl5b/uL18 forms a heterotrimeric complex with syo1 and rpl11a/rpl11b/uL5. Interaction of this complex with KAP104 allows the nuclear import of the heterotrimer.

The protein localises to the cytoplasm. Its subcellular location is the nucleus. Functionally, component of the ribosome, a large ribonucleoprotein complex responsible for the synthesis of proteins in the cell. The small ribosomal subunit (SSU) binds messenger RNAs (mRNAs) and translates the encoded message by selecting cognate aminoacyl-transfer RNA (tRNA) molecules. The large subunit (LSU) contains the ribosomal catalytic site termed the peptidyl transferase center (PTC), which catalyzes the formation of peptide bonds, thereby polymerizing the amino acids delivered by tRNAs into a polypeptide chain. The nascent polypeptides leave the ribosome through a tunnel in the LSU and interact with protein factors that function in enzymatic processing, targeting, and the membrane insertion of nascent chains at the exit of the ribosomal tunnel. This is Large ribosomal subunit protein uL18A (rpl501) from Schizosaccharomyces pombe (strain 972 / ATCC 24843) (Fission yeast).